We begin with the raw amino-acid sequence, 157 residues long: UPF0225 protein Psyr_3863 (157 aa).

The protein belongs to the UPF0225 family.

In Pseudomonas syringae pv. syringae (strain B728a), this protein is UPF0225 protein Psyr_3863.